The chain runs to 311 residues: Pyrimidine-specific ribonucleoside hydrolase RihA (311 aa).

Histidine 240 is an active-site residue.

This sequence belongs to the IUNH family. RihA subfamily.

Functionally, hydrolyzes cytidine or uridine to ribose and cytosine or uracil, respectively. The polypeptide is Pyrimidine-specific ribonucleoside hydrolase RihA (Salmonella gallinarum (strain 287/91 / NCTC 13346)).